We begin with the raw amino-acid sequence, 55 residues long: Hydrophobic protein LTI6B (55 aa).

A run of 2 helical transmembrane segments spans residues I8 to G28 and F31 to Y51.

It belongs to the UPF0057 (PMP3) family.

The protein resides in the membrane. Its function is as follows. Plays a role in the regulation of membrane potential. Could mediate a proton leak. This chain is Hydrophobic protein LTI6B (LTI6B), found in Oryza sativa subsp. indica (Rice).